Consider the following 255-residue polypeptide: Acetylglutamate kinase (255 aa).

Residues 40–41, Arg62, and Asn153 each bind substrate; that span reads GG.

This sequence belongs to the acetylglutamate kinase family. ArgB subfamily.

The protein localises to the cytoplasm. It carries out the reaction N-acetyl-L-glutamate + ATP = N-acetyl-L-glutamyl 5-phosphate + ADP. It functions in the pathway amino-acid biosynthesis; L-arginine biosynthesis; N(2)-acetyl-L-ornithine from L-glutamate: step 2/4. Catalyzes the ATP-dependent phosphorylation of N-acetyl-L-glutamate. The chain is Acetylglutamate kinase from Bacillus cereus (strain ATCC 10987 / NRS 248).